Reading from the N-terminus, the 145-residue chain is 3-hydroxyacyl-[acyl-carrier-protein] dehydratase FabZ (145 aa).

Residue His49 is part of the active site.

This sequence belongs to the thioester dehydratase family. FabZ subfamily.

The protein resides in the cytoplasm. The catalysed reaction is a (3R)-hydroxyacyl-[ACP] = a (2E)-enoyl-[ACP] + H2O. Functionally, involved in unsaturated fatty acids biosynthesis. Catalyzes the dehydration of short chain beta-hydroxyacyl-ACPs and long chain saturated and unsaturated beta-hydroxyacyl-ACPs. The protein is 3-hydroxyacyl-[acyl-carrier-protein] dehydratase FabZ of Rickettsia peacockii (strain Rustic).